Consider the following 353-residue polypeptide: tRNA-specific 2-thiouridylase MnmA (353 aa).

Residues 7–14 (GLSGGVDS) and leucine 33 each bind ATP. Cysteine 94 acts as the Nucleophile in catalysis. The cysteines at positions 94 and 193 are disulfide-linked. Glycine 119 contacts ATP. The tract at residues 143-145 (KDQ) is interaction with tRNA. Catalysis depends on cysteine 193, which acts as the Cysteine persulfide intermediate. The segment at 298 to 299 (RY) is interaction with tRNA.

Belongs to the MnmA/TRMU family.

Its subcellular location is the cytoplasm. The enzyme catalyses S-sulfanyl-L-cysteinyl-[protein] + uridine(34) in tRNA + AH2 + ATP = 2-thiouridine(34) in tRNA + L-cysteinyl-[protein] + A + AMP + diphosphate + H(+). Its function is as follows. Catalyzes the 2-thiolation of uridine at the wobble position (U34) of tRNA, leading to the formation of s(2)U34. The chain is tRNA-specific 2-thiouridylase MnmA from Picosynechococcus sp. (strain ATCC 27264 / PCC 7002 / PR-6) (Agmenellum quadruplicatum).